A 488-amino-acid polypeptide reads, in one-letter code: MTKNNEAGWNLDHSYTTLPQSFYTEIPPTPVSSPELVKLNHSLAISLGFNPEELKKEAEIAIFAGNALPEGAHPLAQAYAGHQFGHFNMLGDGRALLIGEQMTPAGKRFDIQLKGSGPTPYSRRGDGRAALGPMLREYIISEAMYALDIPTTRSLAVVTTGEPTYRETKLPGAILTRVASSHIRVGTFQYAAARGSIEDLQSLADYTIKRHYPEIEDHENRYTALLQEVIKRQASLIAKWQLVGFIHGVMNTDNITISGETIDYGPCAFMDNYDQGTVFSSIDTQGRYAYGNQPYMAAWDLARLAESLIPILHEDEEEALKIAQDEISKFSVQYENQWFLGMKKKLGLFSNEEQDQSLIEQLLKMMEKFKADYTNTFRSLTLNTLENTPLFDSPEFKEWYKLWQSRLEKQDESKENAYEMMKNNNPSIIPRNHRVEEALEAAVTSGDYSVMEKLLEALANPYAYTTDQEEYCVPPAPTNRPYRTFCGT.

ATP contacts are provided by Gly-91, Gly-93, Arg-94, Lys-114, Asp-126, Gly-127, Arg-177, and Arg-184. Catalysis depends on Asp-253, which acts as the Proton acceptor. Residues Asn-254 and Asp-263 each contribute to the Mg(2+) site. ATP is bound at residue Asp-263.

It belongs to the SELO family. Mg(2+) serves as cofactor. Requires Mn(2+) as cofactor.

It carries out the reaction L-seryl-[protein] + ATP = 3-O-(5'-adenylyl)-L-seryl-[protein] + diphosphate. The catalysed reaction is L-threonyl-[protein] + ATP = 3-O-(5'-adenylyl)-L-threonyl-[protein] + diphosphate. The enzyme catalyses L-tyrosyl-[protein] + ATP = O-(5'-adenylyl)-L-tyrosyl-[protein] + diphosphate. It catalyses the reaction L-histidyl-[protein] + UTP = N(tele)-(5'-uridylyl)-L-histidyl-[protein] + diphosphate. It carries out the reaction L-seryl-[protein] + UTP = O-(5'-uridylyl)-L-seryl-[protein] + diphosphate. The catalysed reaction is L-tyrosyl-[protein] + UTP = O-(5'-uridylyl)-L-tyrosyl-[protein] + diphosphate. Functionally, nucleotidyltransferase involved in the post-translational modification of proteins. It can catalyze the addition of adenosine monophosphate (AMP) or uridine monophosphate (UMP) to a protein, resulting in modifications known as AMPylation and UMPylation. In Bacillus cereus (strain AH187), this protein is Protein nucleotidyltransferase YdiU.